Consider the following 21-residue polypeptide: Paulistine (21 aa).

A disulfide bond links Cys-7 and Cys-14. Thr-21 is modified (threonine amide).

This sequence belongs to the sylv/frat/paul family. In terms of processing, occurs in oxidized and reduced states which are thought to adopt a compact globular and linear structure, respectively.

In terms of biological role, induces transient hyperalgesia and paw edema in mice. Probably exerts its effects via different pathways in an oxidation state-dependent way. This Polybia paulista (Neotropical social wasp) protein is Paulistine.